A 177-amino-acid polypeptide reads, in one-letter code: Large ribosomal subunit protein uL6 (177 aa).

This sequence belongs to the universal ribosomal protein uL6 family. In terms of assembly, part of the 50S ribosomal subunit.

This protein binds to the 23S rRNA, and is important in its secondary structure. It is located near the subunit interface in the base of the L7/L12 stalk, and near the tRNA binding site of the peptidyltransferase center. In Verminephrobacter eiseniae (strain EF01-2), this protein is Large ribosomal subunit protein uL6.